A 370-amino-acid polypeptide reads, in one-letter code: NADH-quinone oxidoreductase subunit D 2 (370 aa).

The protein belongs to the complex I 49 kDa subunit family. As to quaternary structure, NDH-1 is composed of 14 different subunits. Subunits NuoB, C, D, E, F, and G constitute the peripheral sector of the complex.

The protein localises to the cell inner membrane. It carries out the reaction a quinone + NADH + 5 H(+)(in) = a quinol + NAD(+) + 4 H(+)(out). In terms of biological role, NDH-1 shuttles electrons from NADH, via FMN and iron-sulfur (Fe-S) centers, to quinones in the respiratory chain. The immediate electron acceptor for the enzyme in this species is believed to be ubiquinone. Couples the redox reaction to proton translocation (for every two electrons transferred, four hydrogen ions are translocated across the cytoplasmic membrane), and thus conserves the redox energy in a proton gradient. The polypeptide is NADH-quinone oxidoreductase subunit D 2 (Solibacter usitatus (strain Ellin6076)).